Consider the following 210-residue polypeptide: Protein HEADING DATE REPRESSOR 1 (210 aa).

The tract at residues 1–97 is disordered; the sequence is MEEPASADPP…GKRSSAEMLL (97 aa). Residues 29 to 49 are a coiled coil; it reads QQELNKEAADEQLNNQAHEEA. Basic and acidic residues-rich tracts occupy residues 45–54 and 62–79; these read AHEEAMKIDD and DDVH…RKAL. A coiled-coil region spans residues 129-184; sequence RRIAIQEMNRKDREINGLNEQLEEDSRVLELLQKQLADERKKRTEIEKENSMLHEQ.

As to quaternary structure, interacts with OSK3 and OSK4. Mostly expressed in leaves, seedlings and floral organs, and, to a lower extent, in panicle, roots, nodes, internodes, leaf joint and sheath.

The protein localises to the nucleus. Functionally, regulates flowering time via a photoperiod-dependent pathway. Suppressor of flowering that upregulates HD1 and down-regulates EHD1 in long days (LD), thus leading to the down-regulation of HD3A and RFT1. Triggers OSK4-mediated HD1 phosphorylation. This Oryza sativa subsp. japonica (Rice) protein is Protein HEADING DATE REPRESSOR 1.